A 506-amino-acid polypeptide reads, in one-letter code: 2,3-bisphosphoglycerate-independent phosphoglycerate mutase (506 aa).

Asp9 and Ser59 together coordinate Mn(2+). Catalysis depends on Ser59, which acts as the Phosphoserine intermediate. Substrate-binding positions include His120, 149–150 (RD), Arg181, Arg187, 254–257 (RADR), and Lys327. Mn(2+) is bound by residues Asp394, His398, Asp435, His436, and His452.

This sequence belongs to the BPG-independent phosphoglycerate mutase family. Mn(2+) serves as cofactor.

It carries out the reaction (2R)-2-phosphoglycerate = (2R)-3-phosphoglycerate. The protein operates within carbohydrate degradation; glycolysis; pyruvate from D-glyceraldehyde 3-phosphate: step 3/5. Functionally, catalyzes the interconversion of 2-phosphoglycerate and 3-phosphoglycerate. In Natronomonas pharaonis (strain ATCC 35678 / DSM 2160 / CIP 103997 / JCM 8858 / NBRC 14720 / NCIMB 2260 / Gabara) (Halobacterium pharaonis), this protein is 2,3-bisphosphoglycerate-independent phosphoglycerate mutase.